The primary structure comprises 103 residues: UPF0235 protein Rleg2_3707 (103 aa).

This sequence belongs to the UPF0235 family.

This is UPF0235 protein Rleg2_3707 from Rhizobium leguminosarum bv. trifolii (strain WSM2304).